A 564-amino-acid polypeptide reads, in one-letter code: Acetylcholine receptor subunit alpha-type deg-3 (564 aa).

An N-terminal signal peptide occupies residues 1–20 (MTLKIRTIIILFCVISVTTT). The Extracellular portion of the chain corresponds to 21 to 268 (SQSLNATLKT…SLVIQRKPLY (248 aa)). 4 N-linked (GlcNAc...) asparagine glycosylation sites follow: Asn25, Asn37, Asn125, and Asn198. Cystine bridges form between Cys185–Cys199 and Cys248–Cys249. 3 helical membrane-spanning segments follow: residues 269-289 (YLVN…TGFF), 302-319 (INLG…MLMV), and 329-353 (FVPL…LTSV). The Cytoplasmic portion of the chain corresponds to 354–526 (VLSVQGRRQY…WEFLATVLDR (173 aa)). Residues 527–547 (FLLIVFVGAVVIVTAGLILVG) traverse the membrane as a helical segment.

The protein belongs to the ligand-gated ion channel (TC 1.A.9) family. Acetylcholine receptor (TC 1.A.9.1) subfamily. As to quaternary structure, the functional receptor is a heteromer of deg-3 and des-2. Interacts with ric-3; which is required for proper receptor folding.

It is found in the postsynaptic cell membrane. The protein resides in the cell membrane. Subunit of the non-synaptic neuronal acetylcholine receptor, which may play a role in chemotaxis towards choline. After binding choline or acetylcholine, the AChR responds by an extensive change in conformation that affects all subunits and leads to opening of an ion-conducting channel across the plasma membrane. This Caenorhabditis elegans protein is Acetylcholine receptor subunit alpha-type deg-3 (deg-3).